We begin with the raw amino-acid sequence, 235 residues long: MKIKRSFISISVLMVIFGLMISVQFNSLKHPKVRDTRDMWDIREELTSEQKKQEKLLAEINKYDKLLNSYSQTKEMTKETALNNTLQSLKKTAGMTDITGSGIVITISPLFSESLTGEPIENPPPDLLKKLINELNSYGAEHISINERRVVNHTVIRDINGTTKIDGYALDDYPLTVKVLAKDPDMLHSRVKGSGLEDLFASENLALKAGKSESKLTLKAYDRPLDVQQLKLLKD.

A helical membrane pass occupies residues 6-26; sequence SFISISVLMVIFGLMISVQFN.

Belongs to the UPF0749 family.

It is found in the cell membrane. The sequence is that of UPF0749 protein YlxX (ylxX) from Bacillus subtilis (strain 168).